The sequence spans 281 residues: 33 kDa chaperonin (281 aa).

2 disulfides stabilise this stretch: Cys229–Cys231 and Cys262–Cys265.

It belongs to the HSP33 family. Post-translationally, under oxidizing conditions two disulfide bonds are formed involving the reactive cysteines. Under reducing conditions zinc is bound to the reactive cysteines and the protein is inactive.

It localises to the cytoplasm. In terms of biological role, redox regulated molecular chaperone. Protects both thermally unfolding and oxidatively damaged proteins from irreversible aggregation. Plays an important role in the bacterial defense system toward oxidative stress. The chain is 33 kDa chaperonin from Pseudoalteromonas translucida (strain TAC 125).